We begin with the raw amino-acid sequence, 309 residues long: Homoserine O-succinyltransferase (309 aa).

Cys142 serves as the catalytic Acyl-thioester intermediate. Residues Lys163 and Ser192 each contribute to the substrate site. The Proton acceptor role is filled by His235. Glu237 is a catalytic residue. Arg249 provides a ligand contact to substrate.

The protein belongs to the MetA family.

Its subcellular location is the cytoplasm. The catalysed reaction is L-homoserine + succinyl-CoA = O-succinyl-L-homoserine + CoA. It functions in the pathway amino-acid biosynthesis; L-methionine biosynthesis via de novo pathway; O-succinyl-L-homoserine from L-homoserine: step 1/1. In terms of biological role, transfers a succinyl group from succinyl-CoA to L-homoserine, forming succinyl-L-homoserine. This chain is Homoserine O-succinyltransferase, found in Klebsiella pneumoniae subsp. pneumoniae (strain ATCC 700721 / MGH 78578).